The following is a 1218-amino-acid chain: Formin-A (1218 aa).

Positions 1–108 constitute a C2 domain; it reads MADKLYQIKL…ILGEACNYSV (108 aa). A GBD/FH3 domain is found at 139–539; the sequence is EEKKRHDEIQ…QISLRDKNIG (401 aa). Residues 563–638 are a coiled coil; sequence LKSQIESLKK…QLKLTQGTAK (76 aa). The segment at 634–762 is disordered; that stretch reads QGTAKPDSAA…KAAAPPRKEV (129 aa). Over residues 649–747 the composition is skewed to pro residues; sequence APPPPPPPMT…FGKGPPPPPG (99 aa). One can recognise an FH1 domain in the interval 652–737; the sequence is PPPPPMTGGG…AGGPPPPPPP (86 aa). In terms of domain architecture, FH2 spans 759 to 1155; sequence RKEVPVPALK…IAKREAAKKL (397 aa). Residues 1034-1061 adopt a coiled-coil conformation; it reads SLSQVQAEVATLRKEFVQVQKSIETLNS. Disordered regions lie at residues 1153 to 1179 and 1198 to 1218; these read KKLK…TVEV and KNRR…PIDL. In terms of domain architecture, DAD spans 1174–1209; it reads GETVEVKESVVDDLLDTIASGDAFKNRRRRARKTDQ.

Belongs to the formin homology family. Diaphanous subfamily. As to quaternary structure, interacts (via GBD/FH3 domain) with activated Rho-GTPases.

Its function is as follows. Formins play an important role in the nucleation of actin and the formation of linear actin filaments. The protein is Formin-A (forA) of Dictyostelium discoideum (Social amoeba).